Reading from the N-terminus, the 273-residue chain is Coiled-coil domain-containing protein 122 (273 aa).

The segment covering 1–17 (MSDNKERKSQGFPKEDN) has biased composition (basic and acidic residues). The tract at residues 1–39 (MSDNKERKSQGFPKEDNQDTSSLADAVEKVAKQQQSQAS) is disordered. Coiled coils occupy residues 24–116 (ADAV…TAQE) and 179–269 (NRIT…RKCI).

This Homo sapiens (Human) protein is Coiled-coil domain-containing protein 122 (CCDC122).